Here is a 972-residue protein sequence, read N- to C-terminus: Isoleucine--tRNA ligase (972 aa).

The 'HIGH' region motif lies at 63–73; it reads PYANGNIHIGH. Glutamate 603 contributes to the L-isoleucyl-5'-AMP binding site. Positions 644 to 648 match the 'KMSKS' region motif; the sequence is KMSKS. Position 647 (lysine 647) interacts with ATP.

This sequence belongs to the class-I aminoacyl-tRNA synthetase family. IleS type 1 subfamily. As to quaternary structure, monomer.

The protein localises to the cytoplasm. It carries out the reaction tRNA(Ile) + L-isoleucine + ATP = L-isoleucyl-tRNA(Ile) + AMP + diphosphate. In terms of biological role, catalyzes the attachment of isoleucine to tRNA(Ile). As IleRS can inadvertently accommodate and process structurally similar amino acids such as valine, to avoid such errors it has two additional distinct tRNA(Ile)-dependent editing activities. One activity is designated as 'pretransfer' editing and involves the hydrolysis of activated Val-AMP. The other activity is designated 'posttransfer' editing and involves deacylation of mischarged Val-tRNA(Ile). In Brucella abortus (strain 2308), this protein is Isoleucine--tRNA ligase.